Consider the following 218-residue polypeptide: Small ribosomal subunit protein uS3c (218 aa).

Positions 47-118 (VRKHIKSSSN…KLRMALTEVE (72 aa)) constitute a KH type-2 domain.

It belongs to the universal ribosomal protein uS3 family. Part of the 30S ribosomal subunit.

It is found in the plastid. Its subcellular location is the chloroplast. The protein is Small ribosomal subunit protein uS3c (rps3) of Anthoceros angustus (Hornwort).